The sequence spans 187 residues: Elongation factor P (187 aa).

It belongs to the elongation factor P family.

It localises to the cytoplasm. Its pathway is protein biosynthesis; polypeptide chain elongation. Functionally, involved in peptide bond synthesis. Stimulates efficient translation and peptide-bond synthesis on native or reconstituted 70S ribosomes in vitro. Probably functions indirectly by altering the affinity of the ribosome for aminoacyl-tRNA, thus increasing their reactivity as acceptors for peptidyl transferase. The chain is Elongation factor P from Roseobacter denitrificans (strain ATCC 33942 / OCh 114) (Erythrobacter sp. (strain OCh 114)).